We begin with the raw amino-acid sequence, 83 residues long: Large ribosomal subunit protein eL14 (83 aa).

Belongs to the eukaryotic ribosomal protein eL14 family.

This Thermococcus onnurineus (strain NA1) protein is Large ribosomal subunit protein eL14.